The following is a 157-amino-acid chain: Arginine repressor (157 aa).

It belongs to the ArgR family.

It is found in the cytoplasm. It functions in the pathway amino-acid biosynthesis; L-arginine biosynthesis [regulation]. Its function is as follows. Regulates arginine biosynthesis genes. The sequence is that of Arginine repressor from Bacteroides thetaiotaomicron (strain ATCC 29148 / DSM 2079 / JCM 5827 / CCUG 10774 / NCTC 10582 / VPI-5482 / E50).